A 203-amino-acid chain; its full sequence is Protein GrpE (203 aa).

The segment covering 1-10 (MSNESIKAEQ) has biased composition (basic and acidic residues). Residues 1-20 (MSNESIKAEQDLIQEGVESE) form a disordered region.

This sequence belongs to the GrpE family. As to quaternary structure, homodimer.

It localises to the cytoplasm. Participates actively in the response to hyperosmotic and heat shock by preventing the aggregation of stress-denatured proteins, in association with DnaK and GrpE. It is the nucleotide exchange factor for DnaK and may function as a thermosensor. Unfolded proteins bind initially to DnaJ; upon interaction with the DnaJ-bound protein, DnaK hydrolyzes its bound ATP, resulting in the formation of a stable complex. GrpE releases ADP from DnaK; ATP binding to DnaK triggers the release of the substrate protein, thus completing the reaction cycle. Several rounds of ATP-dependent interactions between DnaJ, DnaK and GrpE are required for fully efficient folding. The sequence is that of Protein GrpE from Shewanella sp. (strain MR-7).